Here is a 559-residue protein sequence, read N- to C-terminus: Potassium-transporting ATPase potassium-binding subunit (559 aa).

Transmembrane regions (helical) follow at residues 5 to 25 (GFLL…PLGV), 63 to 83 (LLAI…MLLG), 132 to 152 (GLTV…FALI), 170 to 190 (LVRI…LLFI), 250 to 270 (LTNM…CFAF), 283 to 303 (LLWA…SAEV), 329 to 349 (VLVS…AVIA), 356 to 376 (ALGG…FGGV), 379 to 399 (GLYG…LMIG), 416 to 436 (MTAL…ALAM), 484 to 504 (LLAF…MAIA), and 524 to 544 (GALF…LTFI).

The protein belongs to the KdpA family. The system is composed of three essential subunits: KdpA, KdpB and KdpC.

It localises to the cell inner membrane. In terms of biological role, part of the high-affinity ATP-driven potassium transport (or Kdp) system, which catalyzes the hydrolysis of ATP coupled with the electrogenic transport of potassium into the cytoplasm. This subunit binds the periplasmic potassium ions and delivers the ions to the membrane domain of KdpB through an intramembrane tunnel. This Citrobacter koseri (strain ATCC BAA-895 / CDC 4225-83 / SGSC4696) protein is Potassium-transporting ATPase potassium-binding subunit.